We begin with the raw amino-acid sequence, 240 residues long: MAGPPRLLLLPLLLALARGLPGALAAQEVQQSPHCTTVPVGASVNITCSTSGGLRGIYLRQLGPQPQDIIYYEDGVVPTTDRRFRGRIDFSGSQDNLTITMHRLQLSDTGTYTCQAITEVNVYGSGTLVLVTEEQSQGWHRCSDAPPRASALPAPPTGSALPDPQTASALPDPPAASALPAALAVISFLLGLGLGVACVLARTQIKKLCSWRDKNSAACVVYEDMSHSRCNTLSSPNQYQ.

Positions 1-25 (MAGPPRLLLLPLLLALARGLPGALA) are cleaved as a signal peptide. The Ig-like domain occupies 26 to 130 (AQEVQQSPHC…NVYGSGTLVL (105 aa)). Over 26–180 (AQEVQQSPHC…PDPPAASALP (155 aa)) the chain is Extracellular. Disulfide bonds link C35-C142 and C48-C114. N-linked (GlcNAc...) asparagine glycans are attached at residues N45 and N96. A disordered region spans residues 140-172 (HRCSDAPPRASALPAPPTGSALPDPQTASALPD). 4 repeat units span residues 145-153 (APPRASALP), 154-162 (APPTGSALP), 163-171 (DPQTASALP), and 172-180 (DPPAASALP). A 4 X 9 AA tandem repeats, potential spacer function region spans residues 145-180 (APPRASALPAPPTGSALPDPQTASALPDPPAASALP). Residues 181–201 (AALAVISFLLGLGLGVACVLA) form a helical membrane-spanning segment. C198 is lipidated: S-palmitoyl cysteine. The Cytoplasmic segment spans residues 202 to 240 (RTQIKKLCSWRDKNSAACVVYEDMSHSRCNTLSSPNQYQ).

In terms of assembly, interacts with SECTM1. In terms of tissue distribution, expressed on T-cells and natural killer (NK) cells and their precursors.

It is found in the membrane. Its function is as follows. Transmembrane glycoprotein expressed by T-cells and natural killer (NK) cells and their precursors. Plays a costimulatory role in T-cell activation upon binding to its ligand K12/SECTM1. In turn, mediates the production of cytokines such as IL-2. On resting NK-cells, CD7 activation results in a significant induction of interferon-gamma levels. In Homo sapiens (Human), this protein is T-cell antigen CD7 (CD7).